The chain runs to 158 residues: NAD(P)H-quinone oxidoreductase subunit J, chloroplastic (158 aa).

Belongs to the complex I 30 kDa subunit family. In terms of assembly, NDH is composed of at least 16 different subunits, 5 of which are encoded in the nucleus.

Its subcellular location is the plastid. It is found in the chloroplast thylakoid membrane. The catalysed reaction is a plastoquinone + NADH + (n+1) H(+)(in) = a plastoquinol + NAD(+) + n H(+)(out). It carries out the reaction a plastoquinone + NADPH + (n+1) H(+)(in) = a plastoquinol + NADP(+) + n H(+)(out). In terms of biological role, NDH shuttles electrons from NAD(P)H:plastoquinone, via FMN and iron-sulfur (Fe-S) centers, to quinones in the photosynthetic chain and possibly in a chloroplast respiratory chain. The immediate electron acceptor for the enzyme in this species is believed to be plastoquinone. Couples the redox reaction to proton translocation, and thus conserves the redox energy in a proton gradient. This Dioscorea elephantipes (Elephant's foot yam) protein is NAD(P)H-quinone oxidoreductase subunit J, chloroplastic.